A 111-amino-acid chain; its full sequence is Ribonuclease P protein component (111 aa).

It belongs to the RnpA family. Consists of a catalytic RNA component (M1 or rnpB) and a protein subunit.

It catalyses the reaction Endonucleolytic cleavage of RNA, removing 5'-extranucleotides from tRNA precursor.. RNaseP catalyzes the removal of the 5'-leader sequence from pre-tRNA to produce the mature 5'-terminus. It can also cleave other RNA substrates such as 4.5S RNA. The protein component plays an auxiliary but essential role in vivo by binding to the 5'-leader sequence and broadening the substrate specificity of the ribozyme. This is Ribonuclease P protein component from Clostridium botulinum (strain Loch Maree / Type A3).